A 344-amino-acid polypeptide reads, in one-letter code: Heat-inducible transcription repressor HrcA (344 aa).

Belongs to the HrcA family.

Its function is as follows. Negative regulator of class I heat shock genes (grpE-dnaK-dnaJ and groELS operons). Prevents heat-shock induction of these operons. The polypeptide is Heat-inducible transcription repressor HrcA (Geobacillus sp. (strain WCH70)).